Reading from the N-terminus, the 233-residue chain is 7-cyano-7-deazaguanine synthase (233 aa).

Position 8–18 (8–18 (LSGGLDSTTCM)) interacts with ATP. Cys186, Cys194, Cys197, and Cys200 together coordinate Zn(2+).

It belongs to the QueC family. In terms of assembly, homodimer. Zn(2+) is required as a cofactor.

The enzyme catalyses 7-carboxy-7-deazaguanine + NH4(+) + ATP = 7-cyano-7-deazaguanine + ADP + phosphate + H2O + H(+). The protein operates within purine metabolism; 7-cyano-7-deazaguanine biosynthesis. Functionally, catalyzes the ATP-dependent conversion of 7-carboxy-7-deazaguanine (CDG) to 7-cyano-7-deazaguanine (preQ(0)). The polypeptide is 7-cyano-7-deazaguanine synthase (Desulfitobacterium hafniense (strain DSM 10664 / DCB-2)).